The primary structure comprises 258 residues: Imidazole glycerol phosphate synthase subunit HisF (258 aa).

Residues Asp11 and Asp130 contribute to the active site.

The protein belongs to the HisA/HisF family. In terms of assembly, heterodimer of HisH and HisF.

Its subcellular location is the cytoplasm. It carries out the reaction 5-[(5-phospho-1-deoxy-D-ribulos-1-ylimino)methylamino]-1-(5-phospho-beta-D-ribosyl)imidazole-4-carboxamide + L-glutamine = D-erythro-1-(imidazol-4-yl)glycerol 3-phosphate + 5-amino-1-(5-phospho-beta-D-ribosyl)imidazole-4-carboxamide + L-glutamate + H(+). The protein operates within amino-acid biosynthesis; L-histidine biosynthesis; L-histidine from 5-phospho-alpha-D-ribose 1-diphosphate: step 5/9. IGPS catalyzes the conversion of PRFAR and glutamine to IGP, AICAR and glutamate. The HisF subunit catalyzes the cyclization activity that produces IGP and AICAR from PRFAR using the ammonia provided by the HisH subunit. This Shigella sonnei (strain Ss046) protein is Imidazole glycerol phosphate synthase subunit HisF.